The primary structure comprises 300 residues: Dipeptide transport system permease protein DppC (300 aa).

The Cytoplasmic portion of the chain corresponds to 1-31 (MSQVTENKVISAPVPMTPLQEFWHYFKRNKG). The chain crosses the membrane as a helical span at residues 32-52 (AVVGLVYVVIVLFIAIFANWI). The Periplasmic portion of the chain corresponds to 53-101 (APYNPAEQFRDALLAPPAWQEGGSMAHLLGTDDVGRDVLSRLMYGARLS). Positions 98–287 (ARLSLLVGCL…LTVLAFNLMG (190 aa)) constitute an ABC transmembrane type-1 domain. The helical transmembrane segment at 102 to 122 (LLVGCLVVVLSLIMGVILGLI) threads the bilayer. Topologically, residues 123–136 (AGYFGGLVDNIIMR) are cytoplasmic. A helical transmembrane segment spans residues 137–157 (VVDIMLALPSLLLALVLVAIF). Topologically, residues 158 to 206 (GPSIGNAALALTFVALPHYVRLTRAAVLVEVNRDYVTASRVAGAGAMRQ) are periplasmic. A helical transmembrane segment spans residues 207 to 227 (MFINIFPNCLAPLIVQASLGF). The Cytoplasmic segment spans residues 228-230 (SNA). Residues 231–251 (ILDMAALGFLGMGAQPPTPEW) form a helical membrane-spanning segment. Residues 252–265 (GTMLSDVLQFAQSA) are Periplasmic-facing. Residues 266–286 (WWVVTFPGLAILLTVLAFNLM) traverse the membrane as a helical segment. At 287 to 300 (GDGLRDALDPKLKQ) the chain is on the cytoplasmic side.

This sequence belongs to the binding-protein-dependent transport system permease family. OppBC subfamily. As to quaternary structure, the complex is composed of two ATP-binding proteins (DppD and DppF), two transmembrane proteins (DppB and DppC) and a solute-binding protein (DppA).

Its subcellular location is the cell inner membrane. Part of the ABC transporter DppABCDF involved in dipeptide transport. Responsible for the translocation of the substrate across the membrane. The protein is Dipeptide transport system permease protein DppC (dppC) of Escherichia coli O157:H7.